The following is a 136-amino-acid chain: MLQPKRTKFRKMMKGRNRGLATGHKVSFGEIGLQAVGRCRLSARQIESARRAMTRHVKRQGKIWIRVFPDKPVTKKPLEVRMGKGKGSVEYWVAKIKPGQMLFEMQGVEETVAIEAFALASGKLPVKTTIIKRTVM.

The protein belongs to the universal ribosomal protein uL16 family. In terms of assembly, part of the 50S ribosomal subunit.

In terms of biological role, binds 23S rRNA and is also seen to make contacts with the A and possibly P site tRNAs. In Vesicomyosocius okutanii subsp. Calyptogena okutanii (strain HA), this protein is Large ribosomal subunit protein uL16.